The primary structure comprises 636 residues: Chaperone protein HtpG (636 aa).

An a; substrate-binding region spans residues 1–344 (MTMSVETQKE…SNDLSLNVSR (344 aa)). The interval 345 to 561 (EILQKDPIID…EQDLGMQMRQ (217 aa)) is b. The interval 562 to 636 (ILEASGQKVP…LNKLLVELSV (75 aa)) is c.

It belongs to the heat shock protein 90 family. Homodimer.

The protein resides in the cytoplasm. Functionally, molecular chaperone. Has ATPase activity. The chain is Chaperone protein HtpG from Pseudomonas fluorescens (strain SBW25).